The sequence spans 149 residues: Nucleoside diphosphate kinase 1 (149 aa).

ATP is bound by residues lysine 9, phenylalanine 57, arginine 85, threonine 91, arginine 102, and asparagine 112. Catalysis depends on histidine 115, which acts as the Pros-phosphohistidine intermediate.

It belongs to the NDK family. Homohexamer. It depends on Mg(2+) as a cofactor.

It carries out the reaction a 2'-deoxyribonucleoside 5'-diphosphate + ATP = a 2'-deoxyribonucleoside 5'-triphosphate + ADP. The catalysed reaction is a ribonucleoside 5'-diphosphate + ATP = a ribonucleoside 5'-triphosphate + ADP. Functionally, major role in the synthesis of nucleoside triphosphates other than ATP. The ATP gamma phosphate is transferred to the NDP beta phosphate via a ping-pong mechanism, using a phosphorylated active-site intermediate. This NDK is microtubule-associated. This chain is Nucleoside diphosphate kinase 1 (NDKR), found in Oryza sativa subsp. japonica (Rice).